The following is a 474-amino-acid chain: Cobyric acid synthase (474 aa).

The 181-residue stretch at 251–431 folds into the GATase cobBQ-type domain; the sequence is TGFVAIPRLP…LHGLLENSAY (181 aa). C328 serves as the catalytic Nucleophile. The active site involves H423.

Belongs to the CobB/CobQ family. CobQ subfamily.

It functions in the pathway cofactor biosynthesis; adenosylcobalamin biosynthesis. Catalyzes amidations at positions B, D, E, and G on adenosylcobyrinic A,C-diamide. NH(2) groups are provided by glutamine, and one molecule of ATP is hydrogenolyzed for each amidation. The chain is Cobyric acid synthase from Deinococcus radiodurans (strain ATCC 13939 / DSM 20539 / JCM 16871 / CCUG 27074 / LMG 4051 / NBRC 15346 / NCIMB 9279 / VKM B-1422 / R1).